A 102-amino-acid polypeptide reads, in one-letter code: Small ribosomal subunit protein uS10 (102 aa).

This sequence belongs to the universal ribosomal protein uS10 family. Part of the 30S ribosomal subunit.

In terms of biological role, involved in the binding of tRNA to the ribosomes. This Fervidobacterium nodosum (strain ATCC 35602 / DSM 5306 / Rt17-B1) protein is Small ribosomal subunit protein uS10.